We begin with the raw amino-acid sequence, 116 residues long: Large ribosomal subunit protein bL17 (116 aa).

It belongs to the bacterial ribosomal protein bL17 family. Part of the 50S ribosomal subunit. Contacts protein L32.

This is Large ribosomal subunit protein bL17 from Aliarcobacter butzleri (strain RM4018) (Arcobacter butzleri).